We begin with the raw amino-acid sequence, 198 residues long: Hookworm platelet inhibitor 1 (198 aa).

Residues 1–17 (MSSYLLVLVAILGFAYA) form the signal peptide. Intrachain disulfides connect Cys-24-Cys-65, Cys-78-Cys-146, Cys-141-Cys-154, Cys-174-Cys-186, and Cys-177-Cys-195.

This sequence belongs to the CRISP family. In terms of assembly, monomer. As to expression, detected in cephalic glands.

The protein resides in the secreted. Functionally, hookworms inhibitor of platelet aggregation and adhesion. Native protein inhibits platelet aggregation induced by ADP, epinephrine, and thrombin. In addition, it prevents adhesion of resting platelets to immobilized fibrinogen and collagen. May act by binding to glycoprotein IIb/IIIa (ITGA2B/ITGB3) and integrin alpha-2/beta-1 (ITGA1/ITGB1), respectively. It is noteworthy that the recombinant protein fails to inhibit binding to fibrinogen (through ITGA2B/ITGB3) and collagen (through ITGA1/ITGB1). The protein is Hookworm platelet inhibitor 1 of Ancylostoma caninum (Dog hookworm).